The following is a 127-amino-acid chain: Large ribosomal subunit protein bL12 (127 aa).

Belongs to the bacterial ribosomal protein bL12 family. As to quaternary structure, homodimer. Part of the ribosomal stalk of the 50S ribosomal subunit. Forms a multimeric L10(L12)X complex, where L10 forms an elongated spine to which 2 to 4 L12 dimers bind in a sequential fashion. Binds GTP-bound translation factors.

Functionally, forms part of the ribosomal stalk which helps the ribosome interact with GTP-bound translation factors. Is thus essential for accurate translation. In Desulforapulum autotrophicum (strain ATCC 43914 / DSM 3382 / VKM B-1955 / HRM2) (Desulfobacterium autotrophicum), this protein is Large ribosomal subunit protein bL12.